We begin with the raw amino-acid sequence, 192 residues long: Epoxyqueuosine reductase QueH (192 aa).

[4Fe-4S] cluster-binding residues include C9, C10, C87, and C90. C169 and C171 are joined by a disulfide.

This sequence belongs to the QueH family.

The enzyme catalyses epoxyqueuosine(34) in tRNA + AH2 = queuosine(34) in tRNA + A + H2O. It functions in the pathway tRNA modification; tRNA-queuosine biosynthesis. Catalyzes the conversion of epoxyqueuosine (oQ) to queuosine (Q), which is a hypermodified base found in the wobble positions of tRNA(Asp), tRNA(Asn), tRNA(His) and tRNA(Tyr). The protein is Epoxyqueuosine reductase QueH of Thermotoga maritima (strain ATCC 43589 / DSM 3109 / JCM 10099 / NBRC 100826 / MSB8).